The chain runs to 1275 residues: Mediator of RNA polymerase II transcription subunit 33B (1275 aa).

Low complexity predominate over residues 772 to 791; that stretch reads GSQSLTPSSGSSSLSTSGGD. Positions 772 to 792 are disordered; it reads GSQSLTPSSGSSSLSTSGGDD.

The protein belongs to the Mediator complex subunit 33 family. In terms of assembly, component of the Mediator complex. Ubiquitous.

The protein localises to the nucleus. Its function is as follows. Component of the Mediator complex, a coactivator involved in the regulated transcription of nearly all RNA polymerase II-dependent genes. Mediator functions as a bridge to convey information from gene-specific regulatory proteins to the basal RNA polymerase II transcription machinery. The Mediator complex, having a compact conformation in its free form, is recruited to promoters by direct interactions with regulatory proteins and serves for the assembly of a functional preinitiation complex with RNA polymerase II and the general transcription factors. Involved in the repression of phenylpropanoid biosynthesis. May compete with MED33B for common binding partners or for occupancy in Mediator. The chain is Mediator of RNA polymerase II transcription subunit 33B (MED33B) from Arabidopsis thaliana (Mouse-ear cress).